Consider the following 248-residue polypeptide: 26.2 kDa heat shock protein, mitochondrial (248 aa).

A mitochondrion-targeting transit peptide spans 1–32 (MASTVALKGRPLATLLRQLLAADAPPAATGRP). Residues 26-48 (PAATGRPVAAAPAASGKPVTAPA) form a disordered region. In terms of domain architecture, sHSP spans 139–248 (ATAAARRGGW…RKDVFQVNVE (110 aa)).

It belongs to the small heat shock protein (HSP20) family. As to quaternary structure, may form oligomeric structures.

It localises to the mitochondrion. In Oryza sativa subsp. japonica (Rice), this protein is 26.2 kDa heat shock protein, mitochondrial (HSP26.2).